The sequence spans 231 residues: Eukaryotic translation initiation factor 4E allele A (231 aa).

Residues 1–20 show a composition bias toward basic and acidic residues; it reads MAAAEMERTTSFDAAEKLKA. A disordered region spans residues 1 to 36; that stretch reads MAAAEMERTTSFDAAEKLKAADAGGGEVDDELEEGE. The span at 27–36 shows a compositional bias: acidic residues; it reads EVDDELEEGE. EIF4G-binding stretches follow at residues 56-59 and 66-102; these read HPLE and FDSP…NNIH. MRNA contacts are provided by residues 74–79, lysine 106, and 124–125; these read RQTAWG and WE. Cysteine 129 and cysteine 167 form a disulfide bridge. Residues 150-159 are EIF4G-binding; the sequence is YTLLAMIGHQ. MRNA contacts are provided by residues 174–179 and 219–223; these read RSKGEK and KRLDR.

This sequence belongs to the eukaryotic initiation factor 4E family. EIF4F is a multi-subunit complex, the composition of which varies with external and internal environmental conditions. It is composed of at least EIF4A, EIF4E and EIF4G. EIF4E is also known to interact with other partners. In higher plants two isoforms of EIF4F have been identified, named isoform EIF4F and isoform EIF(iso)4F. Isoform EIF4F has subunits p220 and p26, whereas isoform EIF(iso)4F has subunits p82 and p28. As to quaternary structure, (Microbial infection) Interacts with viral genome-linked protein (VPg); this interaction is possible in susceptible hosts but impaired in resistant plants. In terms of processing, according to the redox status, the Cys-129-Cys-167 disulfide bridge may have a role in regulating protein function by affecting its ability to bind capped mRNA.

The protein localises to the nucleus. It is found in the cytoplasm. Functionally, component of the protein complex eIF4F, which is involved in the recognition of the mRNA cap, ATP-dependent unwinding of 5'-terminal secondary structure and recruitment of mRNA to the ribosome. Recognizes and binds the 7-methylguanosine-containing mRNA cap during an early step in the initiation of protein synthesis and facilitates ribosome binding by inducing the unwinding of the mRNAs secondary structures. Key component of recessive resistance to potyviruses. In terms of biological role, (Microbial infection) Susceptibility host factor required for viral infection (e.g. Potato virus Y (PVY)) by recruiting viral RNAs to the host ribosomal complex via an interaction with viral genome-linked protein (VPg). This Solanum tuberosum (Potato) protein is Eukaryotic translation initiation factor 4E allele A.